Consider the following 182-residue polypeptide: Large ribosomal subunit protein uL6 (182 aa).

Belongs to the universal ribosomal protein uL6 family. In terms of assembly, part of the 50S ribosomal subunit.

This protein binds to the 23S rRNA, and is important in its secondary structure. It is located near the subunit interface in the base of the L7/L12 stalk, and near the tRNA binding site of the peptidyltransferase center. This chain is Large ribosomal subunit protein uL6, found in Methanococcus maripaludis (strain C5 / ATCC BAA-1333).